The chain runs to 492 residues: N-succinylglutamate 5-semialdehyde dehydrogenase (492 aa).

220–225 (GSANTG) contacts NAD(+). Active-site residues include Glu-243 and Cys-277.

This sequence belongs to the aldehyde dehydrogenase family. AstD subfamily.

The enzyme catalyses N-succinyl-L-glutamate 5-semialdehyde + NAD(+) + H2O = N-succinyl-L-glutamate + NADH + 2 H(+). Its pathway is amino-acid degradation; L-arginine degradation via AST pathway; L-glutamate and succinate from L-arginine: step 4/5. Functionally, catalyzes the NAD-dependent reduction of succinylglutamate semialdehyde into succinylglutamate. This is N-succinylglutamate 5-semialdehyde dehydrogenase from Escherichia fergusonii (strain ATCC 35469 / DSM 13698 / CCUG 18766 / IAM 14443 / JCM 21226 / LMG 7866 / NBRC 102419 / NCTC 12128 / CDC 0568-73).